A 415-amino-acid polypeptide reads, in one-letter code: Putative competence-damage inducible protein (415 aa).

Belongs to the CinA family.

The polypeptide is Putative competence-damage inducible protein (Listeria innocua serovar 6a (strain ATCC BAA-680 / CLIP 11262)).